The primary structure comprises 665 residues: Adenylate cyclase 1 (665 aa).

The disordered stretch occupies residues 1–25; sequence MLQRSESGFKDIESMQDSNADKPSR. Basic and acidic residues predominate over residues 7–24; the sequence is SGFKDIESMQDSNADKPS. A run of 2 helical transmembrane segments spans residues 33–53 and 373–393; these read SLLG…LVGL and AVSG…AHLI. The region spanning 394-444 is the HAMP domain; sequence TKSLNQLTDSANRLQDLDFATPIDVSSHVAEISTLNGAMNRARDAIFTFAL. The Guanylate cyclase domain maps to 471–603; sequence TAMFTDIYDF…DTVNVASRLE (133 aa). Residues Asp-476 and Asp-520 each coordinate Mg(2+).

Belongs to the adenylyl cyclase class-3 family. Mg(2+) is required as a cofactor.

The protein resides in the cell membrane. The catalysed reaction is ATP = 3',5'-cyclic AMP + diphosphate. Plays essential roles in regulation of cellular metabolism by catalyzing the synthesis of a second messenger, cAMP. In Rhizobium meliloti (strain 1021) (Ensifer meliloti), this protein is Adenylate cyclase 1 (cya1).